Consider the following 765-residue polypeptide: MLSELGFIRTIGEDEDVQVEPETDSEDEEEEGPIVLGRKQKALQKNRSADFNPDFVFTEKEGMYDGSWAMADVLSQLKKKRAATTLDEKIEKVRKKRKTEDKEAKSGKSEKEKEAKEGSEPEEEEDLERKDVEASEDEESETDYSSADENILTKADTLKIKERKKKKKKGQEAGGFFEDASQYDENLSFQDMNLSRPLLKAITAMGFKQPTPIQKACIPVGLLGKDICACAATGTGKTAAFALPVLERLIYKPRQAPVTRVLVLVPTRELGIQVHSVTKQLAQFCSITTCLAVGGLDVKSQEAALRAAPDILIATPGRLIDHLHNCPSFHLSSIEVLILDEADRMLDEYFEEQMKEIIRMCSHHRQTMLFSATMTDEVKDLASVSLKNPVRIFVNSNTDVAPFLRQEFIRIRPNREGDREAIVAALLMRTFTDHVMLFTQTKKQAHRMHILLGLMGLQVGELHGNLSQTQRLEALRRFKDEQIDILVATDVAARGLDIEGVKTVINFTMPNTIKHYVHRVGRTARAGRAGRSVSLVGEEERKMLKEIVKAAKAPVKARILPQDVILKFRDKIEKMEKDVYAVLQLEAEEKEMQKSEAQINTAQRLLEKGKEAPNPEPERSWFQTKEERKKEKIAKALQEFDLALRGKKKRKKFMKEAKKKGEMTAEERSQFEILKAQMFAERLAKRNRRAKRARAMPEEEPVRAPAKKQKQVKKSVFDEELTNTSKKALKQYRAGPSFEERKKLGLPHQRRGGNFKSKSRYKRRK.

The segment at 1–48 is disordered; it reads MLSELGFIRTIGEDEDVQVEPETDSEDEEEEGPIVLGRKQKALQKNRS. Positions 13–32 are enriched in acidic residues; that stretch reads EDEDVQVEPETDSEDEEEEG. Ser-25 and Ser-48 each carry phosphoserine. The Required for interaction with the PEBOW complex motif lies at 55-57; that stretch reads FVF. The tract at residues 88–148 is disordered; it reads EKIEKVRKKR…ESETDYSSAD (61 aa). Basic and acidic residues predominate over residues 98-119; sequence KTEDKEAKSGKSEKEKEAKEGS. Ser-135 and Ser-146 each carry phosphoserine. Residues 164–169 carry the Nuclear localization signal motif; it reads KKKKKK. Positions 187–215 match the Q motif motif; it reads LSFQDMNLSRPLLKAITAMGFKQPTPIQK. The 175-residue stretch at 218–392 folds into the Helicase ATP-binding domain; sequence IPVGLLGKDI…SVSLKNPVRI (175 aa). ATP is bound at residue 231 to 238; the sequence is AATGTGKT. Residues 340–343 carry the DEAD box motif; it reads DEAD. In terms of domain architecture, Helicase C-terminal spans 426–572; it reads LLMRTFTDHV…DVILKFRDKI (147 aa). Composition is skewed to basic residues over residues 685–694 and 744–765; these read KRNRRAKRAR and LGLP…KRRK. The interval 685 to 765 is disordered; sequence KRNRRAKRAR…KSKSRYKRRK (81 aa).

The protein belongs to the DEAD box helicase family. DDX27/DRS1 subfamily. Associates with PeBoW complex, composed of BOP1, PES1 and WDR12. Interacts directly with BOP1 and PES1.

The protein resides in the nucleus. Its subcellular location is the nucleolus. The protein localises to the chromosome. It catalyses the reaction ATP + H2O = ADP + phosphate + H(+). Probable ATP-dependent RNA helicase. Component of the nucleolar ribosomal RNA (rRNA) processing machinery that regulates 3' end formation of ribosomal 47S rRNA. The chain is Probable ATP-dependent RNA helicase DDX27 (DDX27) from Bos taurus (Bovine).